The primary structure comprises 509 residues: Zinc metalloproteinase aureolysin (509 aa).

The first 27 residues, 1–27 (MRKFSRYAFTSMATVTLLSSLTPAALA), serve as a signal peptide directing secretion. Residues 28–208 (SDTNHKPATS…VVEKTNLVKE (181 aa)) constitute a propeptide that is removed on maturation. Aspartate 348 lines the Ca(2+) pocket. Zn(2+) is bound at residue histidine 352. Glutamate 353 is a catalytic residue. Residues histidine 356 and glutamate 376 each coordinate Zn(2+). Positions 387, 389, 390, 392, 395, 398, 399, 402, and 405 each coordinate Ca(2+). Histidine 436 functions as the Proton donor in the catalytic mechanism.

It belongs to the peptidase M4 family. As to quaternary structure, monomer. Requires Ca(2+) as cofactor. Zn(2+) is required as a cofactor.

It carries out the reaction Cleavage of insulin B chain with specificity similar to that of thermolysin, preferring hydrophobic P1' residues. Activates the glutamyl endopeptidase (EC 3.4.21.19) of Staphylococcus aureus.. Functionally, plays an essential role in immune evasion by helping bacteria to resist complement-mediated killing by neutrophils. Inhibits the deposition of host C3b on bacterial surfaces and the release of the chemoattractant C5a by cleaving the central complement protein C3. The cleavage site renders the C3b molecule vulnerable to proteolytic degradation by host regulators. Cleaves and inactivates host SERPINA1, which is an endogenous protease inhibitor essential for controlling neutrophil serine protease elastase. Also plays an essential role in the cleavage and subsequent activation of the serine protease SspA (glutamyl endopeptidase) which is involved in colonization and infection of human tissues. The chain is Zinc metalloproteinase aureolysin from Staphylococcus aureus.